Here is a 305-residue protein sequence, read N- to C-terminus: Tetraacyldisaccharide 4'-kinase (305 aa).

39–46 is an ATP binding site; that stretch reads SVGGNGKT.

Belongs to the LpxK family.

The catalysed reaction is a lipid A disaccharide + ATP = a lipid IVA + ADP + H(+). It participates in glycolipid biosynthesis; lipid IV(A) biosynthesis; lipid IV(A) from (3R)-3-hydroxytetradecanoyl-[acyl-carrier-protein] and UDP-N-acetyl-alpha-D-glucosamine: step 6/6. Its function is as follows. Transfers the gamma-phosphate of ATP to the 4'-position of a tetraacyldisaccharide 1-phosphate intermediate (termed DS-1-P) to form tetraacyldisaccharide 1,4'-bis-phosphate (lipid IVA). This chain is Tetraacyldisaccharide 4'-kinase, found in Pseudoalteromonas atlantica (strain T6c / ATCC BAA-1087).